The chain runs to 461 residues: Glycogen synthase (461 aa).

Lys15 serves as a coordination point for ADP-alpha-D-glucose.

It belongs to the glycosyltransferase 1 family. Bacterial/plant glycogen synthase subfamily.

It carries out the reaction [(1-&gt;4)-alpha-D-glucosyl](n) + ADP-alpha-D-glucose = [(1-&gt;4)-alpha-D-glucosyl](n+1) + ADP + H(+). It participates in glycan biosynthesis; glycogen biosynthesis. Synthesizes alpha-1,4-glucan chains using ADP-glucose. This chain is Glycogen synthase, found in Fusobacterium nucleatum subsp. nucleatum (strain ATCC 25586 / DSM 15643 / BCRC 10681 / CIP 101130 / JCM 8532 / KCTC 2640 / LMG 13131 / VPI 4355).